The chain runs to 659 residues: tRNA uridine 5-carboxymethylaminomethyl modification enzyme MnmG (659 aa).

13-18 (GGGHAG) provides a ligand contact to FAD. Position 281-295 (281-295 (GPRYCPSVEDKINRF)) interacts with NAD(+).

The protein belongs to the MnmG family. As to quaternary structure, homodimer. Heterotetramer of two MnmE and two MnmG subunits. The cofactor is FAD.

The protein resides in the cytoplasm. In terms of biological role, NAD-binding protein involved in the addition of a carboxymethylaminomethyl (cmnm) group at the wobble position (U34) of certain tRNAs, forming tRNA-cmnm(5)s(2)U34. This Delftia acidovorans (strain DSM 14801 / SPH-1) protein is tRNA uridine 5-carboxymethylaminomethyl modification enzyme MnmG.